A 654-amino-acid chain; its full sequence is Fructose-1,6-bisphosphatase class 3 (654 aa).

Positions 288 to 307 (NPAFKPKKRPDKHERLTQRE) are disordered. The span at 298 to 307 (DKHERLTQRE) shows a compositional bias: basic and acidic residues.

The protein belongs to the FBPase class 3 family. It depends on Mn(2+) as a cofactor.

It catalyses the reaction beta-D-fructose 1,6-bisphosphate + H2O = beta-D-fructose 6-phosphate + phosphate. The protein operates within carbohydrate biosynthesis; gluconeogenesis. The polypeptide is Fructose-1,6-bisphosphatase class 3 (Staphylococcus aureus (strain Mu3 / ATCC 700698)).